The primary structure comprises 91 residues: Small ribosomal subunit protein uS19 (91 aa).

It belongs to the universal ribosomal protein uS19 family.

Its function is as follows. Protein S19 forms a complex with S13 that binds strongly to the 16S ribosomal RNA. This Aromatoleum aromaticum (strain DSM 19018 / LMG 30748 / EbN1) (Azoarcus sp. (strain EbN1)) protein is Small ribosomal subunit protein uS19.